Consider the following 366-residue polypeptide: DNA integrity scanning protein DisA (366 aa).

One can recognise a DAC domain in the interval 21–159; sequence VHTLKGTLQR…EGKAHMLEQP (139 aa). ATP is bound by residues glycine 88, leucine 106, and 119 to 123; that span reads TRHRS.

Belongs to the DisA family. In terms of assembly, homooctamer. The cofactor is Mg(2+).

The catalysed reaction is 2 ATP = 3',3'-c-di-AMP + 2 diphosphate. Functionally, participates in a DNA-damage check-point. DisA forms globular foci that rapidly scan along the chromosomes searching for lesions. In terms of biological role, also has diadenylate cyclase activity, catalyzing the condensation of 2 ATP molecules into cyclic di-AMP (c-di-AMP). c-di-AMP likely acts as a signaling molecule that may couple DNA integrity with a cellular process. This Corynebacterium glutamicum (strain R) protein is DNA integrity scanning protein DisA.